Here is a 203-residue protein sequence, read N- to C-terminus: Holliday junction branch migration complex subunit RuvA (203 aa).

The segment at 1-63 (MIGKLSGKVD…EEHMHLYGFL (63 aa)) is domain I. Residues 64–142 (TLEEKIFFNL…KISSGSAIIK (79 aa)) form a domain II region. The segment at 143 to 149 (ESLNIKN) is flexible linker. The interval 150 to 203 (ITPVASNEVIKALVNLGFSRFEAQNAVQGIITQNPEISIDELIKTALKNRNSNF) is domain III.

It belongs to the RuvA family. Homotetramer. Forms an RuvA(8)-RuvB(12)-Holliday junction (HJ) complex. HJ DNA is sandwiched between 2 RuvA tetramers; dsDNA enters through RuvA and exits via RuvB. An RuvB hexamer assembles on each DNA strand where it exits the tetramer. Each RuvB hexamer is contacted by two RuvA subunits (via domain III) on 2 adjacent RuvB subunits; this complex drives branch migration. In the full resolvosome a probable DNA-RuvA(4)-RuvB(12)-RuvC(2) complex forms which resolves the HJ.

It is found in the cytoplasm. Its function is as follows. The RuvA-RuvB-RuvC complex processes Holliday junction (HJ) DNA during genetic recombination and DNA repair, while the RuvA-RuvB complex plays an important role in the rescue of blocked DNA replication forks via replication fork reversal (RFR). RuvA specifically binds to HJ cruciform DNA, conferring on it an open structure. The RuvB hexamer acts as an ATP-dependent pump, pulling dsDNA into and through the RuvAB complex. HJ branch migration allows RuvC to scan DNA until it finds its consensus sequence, where it cleaves and resolves the cruciform DNA. The polypeptide is Holliday junction branch migration complex subunit RuvA (Rickettsia peacockii (strain Rustic)).